A 292-amino-acid chain; its full sequence is MKPPQRGRGGGVRGGRGLARGGEGSAVRGSGRGGESGRGRGPGRVKSESDGGIKGGSKVLVTPHRHAGVFVAKSKADALVTKNLVPGEIIYNEKRIFVQNEDRSTVEYRVWNPHRSKLADAITTGVDNIWIKPGVKVLYLGASSGYTVSHVSDIVGPEGCVYAVEHSDICGKVLMNMAEKRTNVIPIIEDARHPAKYRMLVGMVDIIFSDVNHPEQANILSLNASYFLKSGGHFMISIKANSIDSTIAAETVYQMEVEKLQMEELRPTEILHLDSCEEKHACVFGGYRLPRK.

The segment at 1–58 (MKPPQRGRGGGVRGGRGLARGGEGSAVRGSGRGGESGRGRGPGRVKSESDGGIKGGSK) is disordered. Residues 7 to 42 (GRGGGVRGGRGLARGGEGSAVRGSGRGGESGRGRGP) show a composition bias toward gly residues. Residues 146–147 (YT), 165–166 (EH), 190–191 (DA), and 210–213 (DVNH) contribute to the S-adenosyl-L-methionine site.

The protein belongs to the methyltransferase superfamily. Fibrillarin family. Component of box C/D small nucleolar ribonucleoprotein (snoRNP) particles. As to expression, not detectable by RT-PCR.

It localises to the nucleus. Its subcellular location is the nucleolus. The enzyme catalyses L-glutaminyl-[histone H2A] + S-adenosyl-L-methionine = N(5)-methyl-L-glutaminyl-[histone H2A] + S-adenosyl-L-homocysteine + H(+). Its function is as follows. S-adenosyl-L-methionine-dependent methyltransferase that has the ability to methylate both RNAs and proteins. Involved in pre-rRNA processing. Utilizes the methyl donor S-adenosyl-L-methionine to catalyze the site-specific 2'-hydroxyl methylation of ribose moieties in pre-ribosomal RNA. Site specificity is provided by a guide RNA that base pairs with the substrate. Methylation occurs at a characteristic distance from the sequence involved in base pairing with the guide RNA. Also acts as a protein methyltransferase by mediating methylation of 'Gln-105' of histone H2A (H2AQ105me), a modification that impairs binding of the FACT complex and is specifically present at 35S ribosomal DNA locus. The polypeptide is Putative rRNA 2'-O-methyltransferase fibrillarin 3 (FIB3) (Arabidopsis thaliana (Mouse-ear cress)).